A 510-amino-acid polypeptide reads, in one-letter code: MVMELHNHTPFSIYFITSILFIFFVFFKLVQRSDSKTSSTCKLPPGPRTLPLIGNIHQIVGSLPVHYYLKNLADKYGPLMHLKLGEVSNIIVTSPEMAQEIMKTHDLNFSDRPDFVLSRIVSYNGSGIVFSQHGDYWRQLRKICTVELLTAKRVQSFRSIREEEVAELVKKIAATASEEGGSIFNLTQSIYSMTFGIAARAAFGKKSRYQQVFISNMHKQLMLLGGFSVADLYPSSRVFQMMGATGKLEKVHRVTDRVLQDIIDEHKNRNRSSEEREAVEDLVDVLLKFQKESEFRLTDDNIKAVIQDIFIGGGETSSSVVEWGMSELIRNPRVMEEAQAEVRRVYDSKGYVDETELHQLIYLKSIIKETMRLHPPVPLLVPRVSRERCQINGYEIPSKTRIIINAWAIGRNPKYWGETESFKPERFLNSSIDFRGTDFEFIPFGAGRRICPGITFAIPNIELPLAQLLYHFDWKLPNKMKNEELDMTESNGITLRRQNDLCLIPITRLP.

A heme-binding site is contributed by Cys-451.

This sequence belongs to the cytochrome P450 family. It depends on heme as a cofactor.

This is Cytochrome P450 71D10 (CYP71D10) from Glycine max (Soybean).